We begin with the raw amino-acid sequence, 850 residues long: MSNNPPYMTNGIQAAVVEWIRALDLEIISLLLSRAWPLALLTTTELRWRPTVLTDTDNVVRLDRRQRLVRWDRRPPNEIFLEGFVPIVTREDPDWEETDLYGFAKNNHPSIFVSTTKTQRNKKKYVWTPRNANRGIVYQYEIYAPGGVDVNDSFSDASPWPNQMEVAFPGGIQNIYIRSARELHNGRVQRIWINPNFLDPGDLEPIVSSSRTLQVIWRVNHPDGGNKDGRSERSTSSYDDLMYGGTGNVQEDTFGDESNNPKPIADGEFMIESIKDKNSFLDLSKNVNGGIIHSNVYSGGDNQIWVFSYDDNKKAYKIKSYQNSSLYLSWDSNASSKEIILRGYTNSGSNNQYWQIEQTGKNYRLRNLLNLNMIITAQDKSSAFGGKEVIVNTEISNSNTKSSQEWNIIPFDFRPIMDGDYNIFNLDLPNQVVDFSNQPDLLVHGHEFCDNENQTWHFTYNSTYHAYKIWSGRKSNLLLTWDSNATSKEMVVRAYTESRSKNQYWRIEQTGSKSYKLRNLENSNMILGLTNVSTSYGGLNLMVQDDSNGNSNLHSDWDIKPIIYQYVPDGDYNIFNDNFPNIAVDYTNQEGALVHGHNFCSNNNQKWSFVYDGKKKAYKIKSGVNSKLWLTWDSNASSKEMVLRAYTESGNWNQYWRLYQANDGSYIIRNLKEFKMLIALTNIDTPYGGKQLIVTDTKESGNHWYLKKLGEVPLPNRKFRIATKLNYKKVIDSSTAYNLIITHDLNFASSIWELVYDSNKKAYNIYSADINNLGWVYQNKNFFVKLDNIDGPDHGDLRYFWTIEYSMQTGCYLIRSLYDPAHAVGYTDKDSVITDTSTYSDNQLFHFILM.

Ricin B-type lectin domains are found at residues 267–409 (GEFM…WNII), 413–560 (FRPI…WDIK), and 564–707 (YQYV…WYLK).

This sequence belongs to the pierisin ADP-ribosyltransferase family.

The catalysed reaction is a 2'-deoxyguanosine in DNA + NAD(+) = an N(2)-(ADP-L-ribosyl)-2'-deoxyguanosine in DNA + nicotinamide + H(+). Its function is as follows. ADP-ribosylates double-stranded DNA by targeting the N2 amino group of dG residues. Induces apoptosis in a range of human cell lines. May play a role in destroying cells during pupation and/or defense against parasites. The chain is Pierisin from Pieris brassicae (White butterfly).